A 355-amino-acid chain; its full sequence is Guanine nucleotide-binding protein G(z) subunit alpha (355 aa).

The segment covering 1–14 has biased composition (basic and acidic residues); the sequence is MGCRQSSEEKEAAR. A disordered region spans residues 1–26; it reads MGCRQSSEEKEAARRSRRIDRHLRSE. Residue Gly-2 is the site of N-myristoyl glycine attachment. Cys-3 carries the S-palmitoyl cysteine lipid modification. A G-alpha domain is found at 32–355; sequence REIKLLLLGT…QNNLKYIGLC (324 aa). The interval 35-48 is G1 motif; it reads KLLLLGTSNSGKST. GTP-binding positions include 40–47, 176–182, 201–205, 270–273, and Ala-327; these read GTSNSGKS, LRSRDMT, DVGGQ, and NKKD. Mg(2+) is bound by residues Ser-47 and Thr-182. A G2 motif region spans residues 174–182; sequence DILRSRDMT. Positions 197–206 are G3 motif; it reads FKMVDVGGQR. The tract at residues 266-273 is G4 motif; sequence ILFLNKKD. Residues 325–330 form a G5 motif region; sequence TCATDT.

The protein belongs to the G-alpha family. G(i/o/t/z) subfamily. As to quaternary structure, G-proteins are composed of 3 units; alpha, beta and gamma. The alpha chain contains the guanine nucleotide binding site. Interacts with ADGRB2.

The protein resides in the membrane. Guanine nucleotide-binding proteins (G proteins) are involved as modulators or transducers in various transmembrane signaling systems. This Rattus norvegicus (Rat) protein is Guanine nucleotide-binding protein G(z) subunit alpha (Gnaz).